The primary structure comprises 305 residues: Tyrosine recombinase XerC (305 aa).

Residues 4–95 (TQIQELIIKW…AIKNFYKFLE (92 aa)) enclose the Core-binding (CB) domain. The Tyr recombinase domain occupies 116–298 (LLPKALSEEE…SIKHLETAYV (183 aa)). Catalysis depends on residues R159, K182, H250, R253, and H276. Residue Y285 is the O-(3'-phospho-DNA)-tyrosine intermediate of the active site.

This sequence belongs to the 'phage' integrase family. XerC subfamily. Forms a cyclic heterotetrameric complex composed of two molecules of XerC and two molecules of XerD.

It is found in the cytoplasm. Site-specific tyrosine recombinase, which acts by catalyzing the cutting and rejoining of the recombining DNA molecules. The XerC-XerD complex is essential to convert dimers of the bacterial chromosome into monomers to permit their segregation at cell division. It also contributes to the segregational stability of plasmids. The protein is Tyrosine recombinase XerC of Rickettsia bellii (strain OSU 85-389).